The following is a 274-amino-acid chain: Ribosomal RNA small subunit methyltransferase A (274 aa).

S-adenosyl-L-methionine-binding residues include Asn-17, Leu-19, Gly-44, Glu-65, Asp-89, and Asn-111.

The protein belongs to the class I-like SAM-binding methyltransferase superfamily. rRNA adenine N(6)-methyltransferase family. RsmA subfamily.

It localises to the cytoplasm. The catalysed reaction is adenosine(1518)/adenosine(1519) in 16S rRNA + 4 S-adenosyl-L-methionine = N(6)-dimethyladenosine(1518)/N(6)-dimethyladenosine(1519) in 16S rRNA + 4 S-adenosyl-L-homocysteine + 4 H(+). Functionally, specifically dimethylates two adjacent adenosines (A1518 and A1519) in the loop of a conserved hairpin near the 3'-end of 16S rRNA in the 30S particle. May play a critical role in biogenesis of 30S subunits. The polypeptide is Ribosomal RNA small subunit methyltransferase A (Buchnera aphidicola subsp. Schizaphis graminum (strain Sg)).